Reading from the N-terminus, the 803-residue chain is Translation initiation factor IF-2 (803 aa).

2 disordered regions span residues 95–125 (PVVEQKRETEPAPTQEVPLTSDTTNLNEKAE) and 138–178 (EVKE…EREE). Residues 111 to 121 (VPLTSDTTNLN) are compositionally biased toward polar residues. Basic and acidic residues predominate over residues 138 to 155 (EVKEEAKKTPSEKKETPK). The span at 156 to 167 (KGPRKETRRSRK) shows a compositional bias: basic residues. A compositionally biased stretch (basic and acidic residues) spans 168–178 (PDKEDKWEREE). A tr-type G domain is found at 302–471 (PRAPVVTIMG…LLQAEVLELK (170 aa)). Positions 311 to 318 (GHVDHGKT) are G1. GTP is bound at residue 311–318 (GHVDHGKT). The tract at residues 336 to 340 (GITQH) is G2. The tract at residues 357–360 (DTPG) is G3. GTP is bound by residues 357–361 (DTPGH) and 411–414 (NKID). The segment at 411 to 414 (NKID) is G4. Positions 447–449 (SAK) are G5.

The protein belongs to the TRAFAC class translation factor GTPase superfamily. Classic translation factor GTPase family. IF-2 subfamily.

Its subcellular location is the cytoplasm. Its function is as follows. One of the essential components for the initiation of protein synthesis. Protects formylmethionyl-tRNA from spontaneous hydrolysis and promotes its binding to the 30S ribosomal subunits. Also involved in the hydrolysis of GTP during the formation of the 70S ribosomal complex. In Coxiella burnetii (strain CbuK_Q154) (Coxiella burnetii (strain Q154)), this protein is Translation initiation factor IF-2.